The primary structure comprises 817 residues: Two pore calcium channel protein 1 (817 aa).

The Cytoplasmic portion of the chain corresponds to 1-101 (MSVILDDDVL…PKDARALAAY (101 aa)). The tract at residues 22-66 (PLTPSNGLGQEDLPSKNGGGQSGPNSQVPSLVSGADSPPSSPPGH) is disordered. Residues 102–122 (LFVHNHFFYMMELLTALLLLL) form a helical membrane-spanning segment. Residues 123-137 (LSLCESPAVPALKLR) are Extracellular-facing. Residues 138–158 (TYVHATLELFALMVVVFELCM) traverse the membrane as a helical segment. Residues 159–172 (KLRWLGFHTFVRHK) lie on the Cytoplasmic side of the membrane. Residues 173–193 (RTMVKTSVLVVQFIEAIVVLV) traverse the membrane as a helical segment. Over 194-202 (RQTSHVRVT) the chain is Extracellular. A helical membrane pass occupies residues 203–221 (RALRCIFLVDCRYCGGVRR). Residues 222–235 (NLRQIFQSLPPFMD) are Cytoplasmic-facing. Residues 236 to 256 (ILLLLLFFMIIFAILGFYLFS) form a helical membrane-spanning segment. Over 257-263 (TNPSDPY) the chain is Extracellular. An intramembrane region (helical; Pore-forming) is located at residues 264–287 (FNTLENSIVNLFVLLTTANFPDVM). The Extracellular segment spans residues 288-298 (MPSYSRNPWSC). The chain crosses the membrane as a helical span at residues 299-319 (VFFIVYLSIELYFIMNLLLAV). Over 320-445 (VFDTFNDIEK…NILVNSKAFQ (126 aa)) the chain is Cytoplasmic. A helical transmembrane segment spans residues 446 to 466 (YFMYLVVAVNGVWILVETFML). Topologically, residues 467 to 480 (KGGNFISKHVPWSY) are extracellular. The helical transmembrane segment at 481–501 (LVFLTIYGVELFMKVAGLGPV) threads the bilayer. Topologically, residues 502-504 (EYL) are cytoplasmic. The helical transmembrane segment at 505 to 527 (SSGWNLFDFSVTAFAFLGLLALT) threads the bilayer. Residues 528–535 (LNMEPFYF) lie on the Extracellular side of the membrane. Residues 536–550 (IVVLRPLQLLRLFKL) traverse the membrane as a helical segment. Residues 551-574 (KKRYRNVLDTMFELLPRMASLGLT) lie on the Cytoplasmic side of the membrane. Residues 575-595 (LLTFYYSFAIVGMEFFSGRLS) traverse the membrane as a helical segment. Over 596 to 630 (PNCCNSSTVADAYRFINHTVGNKTKVEEGYYYLNN) the chain is Extracellular. Residues 631 to 654 (FDNILNSFVTLFELTVVNNWYIIM) constitute an intramembrane region (helical; Pore-forming). Topologically, residues 655-671 (EGVTSQTSHWSRLYFMT) are extracellular. Residues 672–692 (FYIVTMVVMTIIVAFILEAFV) traverse the membrane as a helical segment. The Cytoplasmic portion of the chain corresponds to 693 to 817 (FRMNYSRKSQ…GSRQRSQTVT (125 aa)). The stretch at 770–794 (SLKMYQEEIQEWYEEHAREQEQQQL) forms a coiled coil. Residues 785-817 (HAREQEQQQLRGSAPSPAAQQTPGSRQRSQTVT) form a disordered region. Residues 802 to 817 (AAQQTPGSRQRSQTVT) show a composition bias toward polar residues.

Belongs to the calcium channel alpha-1 subunit (TC 1.A.1.11) family. Two pore calcium channel subfamily. As to quaternary structure, dimer. Interacts with MTOR; the interaction is required for TPCN1 ATP sensitivity. Interacts with STX7, STX8 and STX12. Interacts with JPT2. Found in a complex with LSM12, TPCN1 and TPCN2. In terms of processing, N-glycosylated. Widely expressed. Expressed at relatively high level in kidney, liver and lung, and in the kidney it is expressed at inner medullary collecting ducts.

It localises to the lysosome membrane. The protein localises to the endosome membrane. The protein resides in the early endosome membrane. It is found in the recycling endosome membrane. The catalysed reaction is Na(+)(in) = Na(+)(out). The enzyme catalyses Ca(2+)(in) = Ca(2+)(out). Na(+) current is inhibited by ATP in a MTORC-dependent manner. ATP sensitivity is independent of PI(3,5)P2. Probably regulated by Mg(2+) ions, cytosolic Mg(2+) selectively inhibits outward current while lysosomal Mg(2+) modestly inhibits both the outward and inward currents. In the absence of Mg(2+), NAADP readily activates TPCN2, with properties similar to PI(3,5)P2. Both current elicited by PI(3,5)P2 as well as NAADP are inhibited by tetrandrine. In terms of biological role, intracellular channel initially characterized as a non-selective Ca(2+)-permeable channel activated by NAADP (nicotinic acid adenine dinucleotide phosphate), it is also a voltage-gated highly-selective Na(+) channel activated directly by PI(3,5)P2 (phosphatidylinositol 3,5-bisphosphate) that senses pH changes and confers electrical excitability to organelles. Localizes to the early and recycling endosomes membranes where it plays a role in the uptake and processing of proteins and regulates organellar membrane excitability, membrane trafficking and pH homeostasis. Ion selectivity is not fixed but rather agonist-dependent and under defined ionic conditions, can be readily activated by both NAADP and PI(3,5)P2. Required for mTOR-dependent nutrient sensing. The chain is Two pore calcium channel protein 1 (Tpcn1) from Rattus norvegicus (Rat).